We begin with the raw amino-acid sequence, 52 residues long: MKSKTSSFPFCLVMFKKLVLLNQLSRQLVKQLLQEWSIMKLWVTLLPEFTNF.

This is an uncharacterized protein from Saccharomyces cerevisiae (strain ATCC 204508 / S288c) (Baker's yeast).